Reading from the N-terminus, the 268-residue chain is Small ribosomal subunit protein uS3 (268 aa).

The KH type-2 domain occupies 38–106; sequence IRKLLATGME…QVQLNILEVK (69 aa). The tract at residues 218-268 is disordered; sequence VAAPAGDRPRRERPSRPRRSGATGTTATSTEAGRAATATADAPATTEQKEG. Residues 237 to 268 show a composition bias toward low complexity; the sequence is SGATGTTATSTEAGRAATATADAPATTEQKEG.

It belongs to the universal ribosomal protein uS3 family. In terms of assembly, part of the 30S ribosomal subunit. Forms a tight complex with proteins S10 and S14.

Functionally, binds the lower part of the 30S subunit head. Binds mRNA in the 70S ribosome, positioning it for translation. This Rhodococcus jostii (strain RHA1) protein is Small ribosomal subunit protein uS3.